The sequence spans 287 residues: Beta-lactamase GES-1 (287 aa).

The N-terminal stretch at 1 to 18 (MRFIHALLLAGIAHSAYA) is a signal peptide. Cysteine 63 and cysteine 233 are oxidised to a cystine. Serine 64 (nucleophile; acyl-ester intermediate) is an active-site residue. Positions 67, 125, 161, and 232 each coordinate a beta-lactam.

Belongs to the class-A beta-lactamase family. Monomer. May form dimers.

It catalyses the reaction a beta-lactam + H2O = a substituted beta-amino acid. Its activity is regulated as follows. Inhibited by the beta-lactamase-blocking agents clavulanic acid, tazobactam, sulbactam and tazobactam and the carbapenem, imipenem. Inhibition by imipenem may involve Gly-165. Its function is as follows. Extended-spectrum beta-lactamase (ESBL) which confers resistance to penicillins, as well as first, second, third and fourth-generation cephalosporins. Has ceftazidime-hydrolyzing activity. Inactive against the carbapenems, imipenem, meropenem, ertapenem and doripenem. However, weak hydrolytic activity with respect to imipenem has also been reported. The polypeptide is Beta-lactamase GES-1 (Klebsiella pneumoniae).